The chain runs to 339 residues: Phosphoribosylformylglycinamidine cyclo-ligase (339 aa).

The protein belongs to the AIR synthase family.

Its subcellular location is the cytoplasm. It catalyses the reaction 2-formamido-N(1)-(5-O-phospho-beta-D-ribosyl)acetamidine + ATP = 5-amino-1-(5-phospho-beta-D-ribosyl)imidazole + ADP + phosphate + H(+). It participates in purine metabolism; IMP biosynthesis via de novo pathway; 5-amino-1-(5-phospho-D-ribosyl)imidazole from N(2)-formyl-N(1)-(5-phospho-D-ribosyl)glycinamide: step 2/2. This Fusobacterium nucleatum subsp. nucleatum (strain ATCC 25586 / DSM 15643 / BCRC 10681 / CIP 101130 / JCM 8532 / KCTC 2640 / LMG 13131 / VPI 4355) protein is Phosphoribosylformylglycinamidine cyclo-ligase.